The chain runs to 283 residues: Lectin subunit alpha (283 aa).

A signal peptide spans 1–23 (MSLTMKNVEGFVIFLVIFTSTAA). One can recognise a C-type lectin domain in the interval 51 to 159 (HECARHDQQL…NVKMGYICEP (109 aa)). 2 disulfides stabilise this stretch: C53–C157 and C132–C149.

Role in the defense system of the organism against microorganisms. This lectin binds galactose. The protein is Lectin subunit alpha of Sarcophaga peregrina (Flesh fly).